Here is a 556-residue protein sequence, read N- to C-terminus: MTPAAVVMSNYGEEEIVRPIADFSPSLWGDRFHSFSLDNQIAGKYAQEIETLKEQSRIILSASSRRTLAEKLDLIDIVERLGIAYHFEKQIDDMLDQFYKADPNFEAHEYNDLQTLSVQFRLLRQHGYNISPKLFIRFQDAKGKFKESLCNDIKGLLNLYEASHVRTHGEDILEEALAFSTAHLESAAPHLKSPLSKQVTHALEQSLHKSIPRVETRYFISIYEEEEQKNDVLLQFAKLDFNLLQMLHKQELSEVSRWWKDLDFVTTLPYARDRAVECYFWTMGVYAEPQYSQARVMLAKTIAMISIVDDTFDAYGIVKELEIYTDAIQRWDISQIDRLPDYMKISYKALLDLYNDYEMELSKDGRSDVVHYAKERMKEIVRNYFVEAKWFIEGYMPPVSEYLSNALATSTYYLLTTTSYLGMKSANKQDFEWLAKNPKILEANVTLCRVIDDIATYEVEKGRGQIATGIECYMRDYGVSTEKAMEKFQEMAETAWKDVNEGILRPTPVSTEILTRILNLARIIDVTYKHNQDGYTHPEKVLKPHIIALLVDSIEI.

The Mg(2+) site is built by aspartate 309, aspartate 313, aspartate 452, threonine 456, and glutamate 460. A DDXXD motif motif is present at residues 309 to 313 (DDTFD).

The protein belongs to the terpene synthase family. Tpsa subfamily. Requires Mg(2+) as cofactor.

Its subcellular location is the cytoplasm. It carries out the reaction (2E,6E)-farnesyl diphosphate = (-)-vetispiradiene + diphosphate. It participates in secondary metabolite biosynthesis; terpenoid biosynthesis. Its function is as follows. Sesquiterpene synthase that catalyzes the formation of vetispiradiene from trans,trans-farnesyl diphosphate. The initial internal cyclization produces the monocyclic intermediate germacrene A. This is Vetispiradiene synthase 1 (PVS1) from Solanum tuberosum (Potato).